A 24-amino-acid chain; its full sequence is Brevinin-1PTa (24 aa).

Cysteines 18 and 24 form a disulfide.

Expressed by the skin glands.

Its subcellular location is the secreted. Its function is as follows. Has antibacterial activity against the Gram-positive bacterium S.aureus ATCC 25923 (MIC=3 uM) and the Gram-negative bacterium E.coli ATCC 25726 (MIC=24 uM). The protein is Brevinin-1PTa of Pulchrana picturata (Malaysian fire frog).